A 342-amino-acid polypeptide reads, in one-letter code: Aquaporin-8 (342 aa).

Transmembrane regions (helical) follow at residues 55 to 75, 98 to 118, and 126 to 146; these read FLAVFVLMVFIEGSAATAIFT, VAGGVSGAFLNPAVALAFAVL, and CIFYMISQYLAAFVASCTMFA. The NPA 1 motif lies at 108 to 110; the sequence is NPA. An N-linked (GlcNAc...) asparagine glycan is attached at asparagine 166. The next 2 membrane-spanning stretches (helical) occupy residues 184–204 and 215–235; these read TAFADQVFCTAILLIVVLAMC and FLPIAIGLLIITISCTLSYNA. An NPA 2 motif is present at residues 240 to 242; that stretch reads NPS. Residues 266–286 form a helical membrane-spanning segment; that stretch reads YTWFFVPVLGSHCGAIIGGAI. Polar residues predominate over residues 302 to 327; that stretch reads TNSVSSMSYNEDNSTLTKRKQVSNIV. Positions 302 to 342 are disordered; the sequence is TNSVSSMSYNEDNSTLTKRKQVSNIVHDSKGAKGSSTAPVN. The N-linked (GlcNAc...) asparagine glycan is linked to asparagine 314.

The protein belongs to the MIP/aquaporin (TC 1.A.8) family.

It is found in the cell membrane. Its function is as follows. Aquaglyceroporin that may modulate the water content and osmolytes during anhydrobiosis. This is Aquaporin-8 from Milnesium tardigradum (Water bear).